The chain runs to 207 residues: Redox-sensing transcriptional repressor Rex (207 aa).

A DNA-binding region (H-T-H motif) is located at residues 15 to 54 (LYYRCLNRLYEEGIEYVASKDIAERLGIKSSQVRKDLSYF). 89-94 (GAGNIG) lines the NAD(+) pocket.

This sequence belongs to the transcriptional regulatory Rex family. In terms of assembly, homodimer.

The protein localises to the cytoplasm. Modulates transcription in response to changes in cellular NADH/NAD(+) redox state. The protein is Redox-sensing transcriptional repressor Rex of Thermosipho africanus (strain TCF52B).